The primary structure comprises 253 residues: Testis-expressed protein 101 (253 aa).

Positions Met-1–Ser-24 are cleaved as a signal peptide. 5 N-linked (GlcNAc...) asparagine glycosylation sites follow: Asn-44, Asn-112, Asn-117, Asn-121, and Asn-162. Positions Glu-53–Asn-117 constitute a UPAR/Ly6 1 domain. The UPAR/Ly6 2 domain maps to Cys-143–Leu-218. A lipid anchor (GPI-anchor amidated serine) is attached at Ser-226. Residues Arg-227–Pro-253 constitute a propeptide, removed in mature form.

In terms of assembly, interacts with VAMP3. Interacts with LY6K. Interacts with DPEP3; co-localized on the cell surface of spermatocytes, spermatids, and testicular spermatozoa, co-localized only in cytoplasmic droplets of caput and corpus epididymal sperm. Interacts with ADAM5. Post-translationally, N-glycosylated; by high mannose and/or biantennary complex and/or certain types of hybrid oligosaccharides; possesses different oligosaccharides chains according to its subcellular localization in the testis. In terms of processing, sheds from membrane raft by ACE and released from the cell surface of epididymal sperm while it passes through the caput epididymis leading to disappearance of TEX101 on spermatozoa; is essential to produce fertile spermatozoa.

The protein localises to the cell membrane. Its subcellular location is the membrane raft. It is found in the cytoplasmic vesicle. It localises to the secretory vesicle. The protein resides in the acrosome. The protein localises to the secreted. Functionally, plays a role in fertilization by controlling binding of sperm to zona pellucida and migration of spermatozoa into the oviduct. May play a role in signal transduction and promote protein tyrosine phosphorylation. The chain is Testis-expressed protein 101 from Cricetulus griseus (Chinese hamster).